Here is a 174-residue protein sequence, read N- to C-terminus: UBX domain-containing protein 5 (174 aa).

The stretch at 8–58 (QKEKFAEDRALLSQQNKEYAESLAKDIAKKEEKDKIRFEAEQKELRKKTIQ) forms a coiled coil. Residues 74–120 (RLLVRYPNGSRLILSFSPSQPMTSLFDAIILNPACPDYFSVRSVYPR) form the UBX domain.

As to quaternary structure, forms a complex composed of deubiquitinating enzyme atx-3, adapter ubxn-5 and cdc-48.1. Interacts with atx-3 (via C-terminus). Interacts with cdc-48.1 (via N-terminus) and cdc-48.2. Specifically expressed in the germline.

In terms of biological role, probably acts as an adapter for ATPase cdc-48.1 and/or cdc-48.2, conferring substrate specificity. Unlike other UBX domain-containing protein does not bind 'Lys-48'-polyubiquitinated chain. The chain is UBX domain-containing protein 5 from Caenorhabditis elegans.